The chain runs to 235 residues: Deoxyribose-phosphate aldolase (235 aa).

The active-site Proton donor/acceptor is Asp-107. Catalysis depends on Lys-167, which acts as the Schiff-base intermediate with acetaldehyde. Residue Lys-197 is the Proton donor/acceptor of the active site.

This sequence belongs to the DeoC/FbaB aldolase family. DeoC type 1 subfamily. Homotetramer.

The protein localises to the cytoplasm. It carries out the reaction 2-deoxy-D-ribose 5-phosphate = D-glyceraldehyde 3-phosphate + acetaldehyde. Its pathway is carbohydrate degradation; 2-deoxy-D-ribose 1-phosphate degradation; D-glyceraldehyde 3-phosphate and acetaldehyde from 2-deoxy-alpha-D-ribose 1-phosphate: step 2/2. In terms of biological role, catalyzes a reversible aldol reaction between acetaldehyde and D-glyceraldehyde 3-phosphate to generate 2-deoxy-D-ribose 5-phosphate. This chain is Deoxyribose-phosphate aldolase, found in Aeropyrum pernix (strain ATCC 700893 / DSM 11879 / JCM 9820 / NBRC 100138 / K1).